Reading from the N-terminus, the 509-residue chain is Probable cytochrome P450 513A1 (509 aa).

A helical membrane pass occupies residues 2–19 (NYLVGLVLIFTIFYFFLQ). Cys-454 contacts heme.

This sequence belongs to the cytochrome P450 family. Requires heme as cofactor.

It localises to the membrane. The polypeptide is Probable cytochrome P450 513A1 (cyp513A1) (Dictyostelium discoideum (Social amoeba)).